A 248-amino-acid chain; its full sequence is ATP synthase subunit a, chloroplastic (248 aa).

The next 5 helical transmembrane spans lie at 38-58, 96-116, 135-155, 200-220, and 221-241; these read QVLLTSWFVLAVLLGLAVLTV, VPFIGTLFLFIFVSNWSGALV, INTTVALALLTSVAYFYAGLA, LVVAVLVSLVPLVVPIPVMLL, and GLFTSGIQALIFATLAAAYIG.

Belongs to the ATPase A chain family. In terms of assembly, F-type ATPases have 2 components, CF(1) - the catalytic core - and CF(0) - the membrane proton channel. CF(1) has five subunits: alpha(3), beta(3), gamma(1), delta(1), epsilon(1). CF(0) has four main subunits: a, b, b' and c.

Its subcellular location is the plastid. It localises to the chloroplast thylakoid membrane. Functionally, key component of the proton channel; it plays a direct role in the translocation of protons across the membrane. The protein is ATP synthase subunit a, chloroplastic of Welwitschia mirabilis (Tree tumbo).